A 275-amino-acid polypeptide reads, in one-letter code: Voltage-dependent calcium channel gamma-5 subunit (275 aa).

4 helical membrane passes run 8 to 28 (ALTL…GIAV), 103 to 123 (FPLV…IGHI), 129 to 149 (ILAF…VVGL), and 176 to 196 (GWSF…GVMS).

It belongs to the PMP-22/EMP/MP20 family. CACNG subfamily. As to quaternary structure, the L-type calcium channel is composed of five subunits: alpha-1, alpha-2/delta, beta and gamma. Acts as an auxiliary subunit for AMPA-selective glutamate receptors (AMPARs). Found in a complex with GRIA1, GRIA2, GRIA3, GRIA4, CNIH2, CNIH3, CACNG2, CACNG3, CACNG4, CACNG7 and CACNG8. Interacts with GRIA1, GRIA2, GRIA3 and GRIA4.

The protein localises to the membrane. The protein resides in the postsynaptic density membrane. Regulates the gating properties of AMPA-selective glutamate receptors (AMPARs). Modulates their gating properties by accelerating their rates of activation, deactivation and desensitization. Displays subunit-specific AMPA receptor regulation. Shows specificity for GRIA1, GRIA4 and the long isoform of GRIA2. Thought to stabilize the calcium channel in an inactivated (closed) state. This is Voltage-dependent calcium channel gamma-5 subunit (CACNG5) from Homo sapiens (Human).